The chain runs to 620 residues: 1-deoxy-D-xylulose-5-phosphate synthase (620 aa).

Thiamine diphosphate contacts are provided by residues His80 and 121–123 (GHS). Asp152 provides a ligand contact to Mg(2+). Residues 153–154 (GA), Asn181, Tyr288, and Glu370 contribute to the thiamine diphosphate site. A Mg(2+)-binding site is contributed by Asn181.

This sequence belongs to the transketolase family. DXPS subfamily. As to quaternary structure, homodimer. Mg(2+) serves as cofactor. It depends on thiamine diphosphate as a cofactor.

It catalyses the reaction D-glyceraldehyde 3-phosphate + pyruvate + H(+) = 1-deoxy-D-xylulose 5-phosphate + CO2. It functions in the pathway metabolic intermediate biosynthesis; 1-deoxy-D-xylulose 5-phosphate biosynthesis; 1-deoxy-D-xylulose 5-phosphate from D-glyceraldehyde 3-phosphate and pyruvate: step 1/1. Catalyzes the acyloin condensation reaction between C atoms 2 and 3 of pyruvate and glyceraldehyde 3-phosphate to yield 1-deoxy-D-xylulose-5-phosphate (DXP). This Shigella dysenteriae serotype 1 (strain Sd197) protein is 1-deoxy-D-xylulose-5-phosphate synthase.